Consider the following 248-residue polypeptide: Inner membrane protein pE248R (248 aa).

The N-myristoyl glycine; by host moiety is linked to residue glycine 2. Topologically, residues 2–199 (GGSTSKNSFK…ADAISAVFKN (198 aa)) are cytoplasmic. The chain crosses the membrane as a helical span at residues 200 to 220 (IMVAAVVIVLIIVGFIAVFYF). Over 221-248 (LHSRHRHEEEEEAEPLISNKVLKNAAVS) the chain is Extracellular.

Belongs to the asfivirus E248R family. Interacts with A151R.

The protein resides in the host membrane. It is found in the virion membrane. Functionally, essential for viral fusion with host endosomal membrane and core release. This Ornithodoros (relapsing fever ticks) protein is Inner membrane protein pE248R.